Here is a 379-residue protein sequence, read N- to C-terminus: Spermidine/putrescine import ATP-binding protein PotA (379 aa).

Residues 10-240 (VTIDQVSKAY…PATDFVAKFI (231 aa)) form the ABC transporter domain. 42–49 (GPSGCGKT) serves as a coordination point for ATP.

The protein belongs to the ABC transporter superfamily. Spermidine/putrescine importer (TC 3.A.1.11.1) family. The complex is composed of two ATP-binding proteins (PotA), two transmembrane proteins (PotB and PotC) and a solute-binding protein (PotD).

It localises to the cell inner membrane. The catalysed reaction is ATP + H2O + polyamine-[polyamine-binding protein]Side 1 = ADP + phosphate + polyamineSide 2 + [polyamine-binding protein]Side 1.. Its function is as follows. Part of the ABC transporter complex PotABCD involved in spermidine/putrescine import. Responsible for energy coupling to the transport system. This is Spermidine/putrescine import ATP-binding protein PotA from Treponema pallidum (strain Nichols).